A 205-amino-acid polypeptide reads, in one-letter code: Probable GTP-binding protein EngB (205 aa).

An EngB-type G domain is found at 22 to 195; the sequence is NLPEVALVGR…LDLLDYFWNG (174 aa). Residues 30 to 37, 57 to 61, 75 to 78, 142 to 145, and 174 to 176 contribute to the GTP site; these read GRSNVGKS, GKTQT, DLPG, TKAD, and FSA. Positions 37 and 59 each coordinate Mg(2+).

Belongs to the TRAFAC class TrmE-Era-EngA-EngB-Septin-like GTPase superfamily. EngB GTPase family. It depends on Mg(2+) as a cofactor.

Necessary for normal cell division and for the maintenance of normal septation. The protein is Probable GTP-binding protein EngB of Heliobacterium modesticaldum (strain ATCC 51547 / Ice1).